A 364-amino-acid chain; its full sequence is Inner membrane ABC transporter permease protein YejB (364 aa).

The Periplasmic segment spans residues 1–8 (MGAYLIRR). A helical membrane pass occupies residues 9-29 (LLLVIPTLWAIITINFFIVQI). Residues 30-37 (APGGPVDQ) lie on the Cytoplasmic side of the membrane. A helical transmembrane segment spans residues 38–58 (AIAAIEFGNAGVLPGAGGEGV). Topologically, residues 59–135 (RASHAQTGVG…LTLIKDSLPV (77 aa)) are periplasmic. Residues 133–348 (LPVSITLGLW…LIGLLLNIVS (216 aa)) enclose the ABC transmembrane type-1 domain. A helical transmembrane segment spans residues 136 to 156 (SITLGLWSTLIIYLVSIPLGI). At 157-172 (RKAVYNGSRFDVWSSA) the chain is on the cytoplasmic side. A helical membrane pass occupies residues 173-193 (FIIIGYAIPAFLFAILLIVFF). The Periplasmic segment spans residues 194–224 (AGGSYFDLFPLRGLVSANFDSLPWYQKITDY). Residues 225–245 (LWHITLPVLATVIGGFAALTM) traverse the membrane as a helical segment. Residues 246–284 (LTKNSFLDEVRKQYVVTARAKGVSEKNILWKHVFRNAML) lie on the Cytoplasmic side of the membrane. Residues 285 to 305 (LVIAGFPATFISMFFTGSLLI) form a helical membrane-spanning segment. At 306–326 (EVMFSLNGLGLLGYEATVSRD) the chain is on the periplasmic side. Residues 327 to 347 (YPVMFGTLYIFTLIGLLLNIV) traverse the membrane as a helical segment. The Cytoplasmic portion of the chain corresponds to 348–364 (SDISYTLVDPRIDFEGR).

It belongs to the binding-protein-dependent transport system permease family. OppBC subfamily.

It localises to the cell inner membrane. Probably part of a binding-protein-dependent transport system. Probably responsible for the translocation of the substrate across the membrane. The sequence is that of Inner membrane ABC transporter permease protein YejB (yejB) from Escherichia coli O157:H7.